We begin with the raw amino-acid sequence, 346 residues long: Isopentenyl-diphosphate delta-isomerase (346 aa).

Arg-9–Lys-10 contacts substrate. Residues Ser-67, Ser-68 to Thr-70, Ser-98, and Asn-127 each bind FMN. Ser-98–Arg-100 contributes to the substrate binding site. Gln-162 serves as a coordination point for substrate. Glu-163 is a binding site for Mg(2+). Residues Lys-194, Thr-224, Gly-274–Arg-276, and Ala-295–Ala-296 contribute to the FMN site.

It belongs to the IPP isomerase type 2 family. As to quaternary structure, homooctamer. Dimer of tetramers. FMN is required as a cofactor. The cofactor is NADPH. It depends on Mg(2+) as a cofactor.

The protein resides in the cytoplasm. The catalysed reaction is isopentenyl diphosphate = dimethylallyl diphosphate. Functionally, involved in the biosynthesis of isoprenoids. Catalyzes the 1,3-allylic rearrangement of the homoallylic substrate isopentenyl (IPP) to its allylic isomer, dimethylallyl diphosphate (DMAPP). The sequence is that of Isopentenyl-diphosphate delta-isomerase from Stutzerimonas stutzeri (strain A1501) (Pseudomonas stutzeri).